Here is a 214-residue protein sequence, read N- to C-terminus: Pyridoxine/pyridoxamine 5'-phosphate oxidase (214 aa).

Substrate is bound by residues 9 to 12 (RKSY) and Lys-67. FMN-binding positions include 62–67 (RIVLLK), 77–78 (YT), Arg-83, Lys-84, and Gln-106. Residues Tyr-124, Arg-128, and Ser-132 each contribute to the substrate site. FMN is bound by residues 141 to 142 (QS) and Trp-186. Substrate is bound at residue 192 to 194 (RLH). Arg-196 contributes to the FMN binding site.

It belongs to the pyridoxamine 5'-phosphate oxidase family. As to quaternary structure, homodimer. It depends on FMN as a cofactor.

The enzyme catalyses pyridoxamine 5'-phosphate + O2 + H2O = pyridoxal 5'-phosphate + H2O2 + NH4(+). The catalysed reaction is pyridoxine 5'-phosphate + O2 = pyridoxal 5'-phosphate + H2O2. The protein operates within cofactor metabolism; pyridoxal 5'-phosphate salvage; pyridoxal 5'-phosphate from pyridoxamine 5'-phosphate: step 1/1. Its pathway is cofactor metabolism; pyridoxal 5'-phosphate salvage; pyridoxal 5'-phosphate from pyridoxine 5'-phosphate: step 1/1. Catalyzes the oxidation of either pyridoxine 5'-phosphate (PNP) or pyridoxamine 5'-phosphate (PMP) into pyridoxal 5'-phosphate (PLP). The protein is Pyridoxine/pyridoxamine 5'-phosphate oxidase of Leptospira interrogans serogroup Icterohaemorrhagiae serovar copenhageni (strain Fiocruz L1-130).